Here is a 282-residue protein sequence, read N- to C-terminus: 2-dehydro-3-deoxyphosphooctonate aldolase (282 aa).

Belongs to the KdsA family.

The protein resides in the cytoplasm. It carries out the reaction D-arabinose 5-phosphate + phosphoenolpyruvate + H2O = 3-deoxy-alpha-D-manno-2-octulosonate-8-phosphate + phosphate. The protein operates within carbohydrate biosynthesis; 3-deoxy-D-manno-octulosonate biosynthesis; 3-deoxy-D-manno-octulosonate from D-ribulose 5-phosphate: step 2/3. It functions in the pathway bacterial outer membrane biogenesis; lipopolysaccharide biosynthesis. The polypeptide is 2-dehydro-3-deoxyphosphooctonate aldolase (Bradyrhizobium diazoefficiens (strain JCM 10833 / BCRC 13528 / IAM 13628 / NBRC 14792 / USDA 110)).